The chain runs to 549 residues: Probable protein kinase UbiB (549 aa).

The Protein kinase domain maps to 123 to 501; sequence DFDDIPLASA…QQKAHKSNYL (379 aa). Residues 129–137 and Lys152 each bind ATP; that span reads LASASISQV. Catalysis depends on Asp287, which acts as the Proton acceptor. 2 helical membrane-spanning segments follow: residues 498-518 and 520-540; these read SNYL…LINQ and ATLW…VLGW.

This sequence belongs to the ABC1 family. UbiB subfamily.

It localises to the cell inner membrane. It participates in cofactor biosynthesis; ubiquinone biosynthesis [regulation]. Its function is as follows. Is probably a protein kinase regulator of UbiI activity which is involved in aerobic coenzyme Q (ubiquinone) biosynthesis. The sequence is that of Probable protein kinase UbiB from Shewanella halifaxensis (strain HAW-EB4).